Consider the following 405-residue polypeptide: Cytoplasmic tRNA 2-thiolation protein 2 (405 aa).

Belongs to the CTU2/NCS2 family.

The protein resides in the cytoplasm. It participates in tRNA modification; 5-methoxycarbonylmethyl-2-thiouridine-tRNA biosynthesis. Functionally, plays a central role in 2-thiolation of mcm(5)S(2)U at tRNA wobble positions of tRNA(Lys), tRNA(Glu) and tRNA(Gln). May act by forming a heterodimer with NCS6/CTU1 that ligates sulfur from thiocarboxylated URM1 onto the uridine of tRNAs at wobble position. This is Cytoplasmic tRNA 2-thiolation protein 2 from Drosophila simulans (Fruit fly).